Here is a 941-residue protein sequence, read N- to C-terminus: Endoplasmic reticulum aminopeptidase 1 (941 aa).

Residue methionine 1 is a topological domain, cytoplasmic. A helical; Signal-anchor for type II membrane protein membrane pass occupies residues valine 2 to leucine 21. Topologically, residues alanine 22–methionine 941 are lumenal. N-linked (GlcNAc...) asparagine glycosylation is found at asparagine 70 and asparagine 154. Residues glutamate 183 and glycine 317 to asparagine 321 contribute to the substrate site. Histidine 353 is a Zn(2+) binding site. The active-site Proton acceptor is the glutamate 354. Zn(2+)-binding residues include histidine 357 and glutamate 376. 2 disulfides stabilise this stretch: cysteine 404-cysteine 443 and cysteine 736-cysteine 743. N-linked (GlcNAc...) asparagine glycosylation is present at asparagine 414. N-linked (GlcNAc...) asparagine glycans are attached at residues asparagine 760 and asparagine 901.

Belongs to the peptidase M1 family. Monomer. May also exist as a heterodimer; with ERAP2. Interacts with RBMX. Zn(2+) serves as cofactor. In terms of processing, N-glycosylated. As to expression, ubiquitous.

The protein resides in the endoplasmic reticulum membrane. Aminopeptidase that plays a central role in peptide trimming, a step required for the generation of most HLA class I-binding peptides. Peptide trimming is essential to customize longer precursor peptides to fit them to the correct length required for presentation on MHC class I molecules. Strongly prefers substrates 9-16 residues long. Rapidly degrades 13-mer to a 9-mer and then stops. Preferentially hydrolyzes the residue Leu and peptides with a hydrophobic C-terminus, while it has weak activity toward peptides with charged C-terminus. May play a role in the inactivation of peptide hormones. May be involved in the regulation of blood pressure through the inactivation of angiotensin II and/or the generation of bradykinin in the kidney. The sequence is that of Endoplasmic reticulum aminopeptidase 1 (ERAP1) from Homo sapiens (Human).